We begin with the raw amino-acid sequence, 372 residues long: Putative aminopeptidase SgcX (372 aa).

H67 and D180 together coordinate a divalent metal cation. The active-site Proton acceptor is the E212. Positions 213, 235, and 329 each coordinate a divalent metal cation.

This sequence belongs to the peptidase M42 family. A divalent metal cation serves as cofactor.

The protein is Putative aminopeptidase SgcX (sgcX) of Salmonella typhi.